A 487-amino-acid polypeptide reads, in one-letter code: Acetylcholine receptor subunit beta-type acr-3 (487 aa).

Residues 1–20 (MQKIWLFSIITIFLITELQC) form the signal peptide. Over 21–231 (YPNSAEERLL…KIRRKALFYT (211 aa)) the chain is Extracellular. The N-linked (GlcNAc...) asparagine glycan is linked to N46. Cysteines 151 and 165 form a disulfide. 3 helical membrane passes run 232 to 252 (VILIMPTVLMAFLSMMVFYLP), 259 to 279 (ITLAISILLALVVFLLVVSKI), and 294 to 314 (LLMTFIMNMITIMVSVIIINV). Over 315-439 (YFRGPATHIM…WKFVSVVIDR (125 aa)) the chain is Cytoplasmic. The disordered stretch occupies residues 380-400 (ISEQPKQTSRKDGSSSEEKLS). The helical transmembrane segment at 440–460 (LLLYLFFAVTTGGTVGILLSA) threads the bilayer.

The protein belongs to the ligand-gated ion channel (TC 1.A.9) family. Acetylcholine receptor (TC 1.A.9.1) subfamily. As to quaternary structure, component of nicotinic acetylcholine receptor. In cholinergic motoneurons, composed of 2 non-alpha subunits acr-2 and acr-3, and 3 alpha subunits unc-38, unc-63 and acr-12.

It localises to the postsynaptic cell membrane. The protein resides in the cell membrane. Functionally, non-alpha subunit of nicotinic acetylcholine receptor (nAChR). Probably acts in cholinergic motoneurons to regulate presynaptic neurotransmitter release, thereby ensuring normal level of excitation of cholinergic motoneurons during locomotion. In Caenorhabditis elegans, this protein is Acetylcholine receptor subunit beta-type acr-3 (acr-3).